A 261-amino-acid chain; its full sequence is MSESIAVIREKLSLVTSEQDPFFQLCTQDERKGVQKLLQSTRKKWEKEAKLAAKLIEMKRYETDLFKQGFQYIAGVDEVGRGPLAGPVVAAAVILPADFSVVGINDSKQLNEAKRDILFDVIKEEAISIGIGIIDHDVIDQVNIYEATKIAMRTALEELNPAPDFVLIDAMPLKYSESELSLIKGDTKSISIAAASIIAKVTRDRMMQQYDELYPGYDFANNMGYGTKKHLNGLDTIGICPIHRLSFSPVKEAKLHFESLK.

Residues 71–259 (QYIAGVDEVG…VKEAKLHFES (189 aa)) enclose the RNase H type-2 domain. Positions 77, 78, and 169 each coordinate a divalent metal cation.

This sequence belongs to the RNase HII family. Mn(2+) is required as a cofactor. The cofactor is Mg(2+).

Its subcellular location is the cytoplasm. The enzyme catalyses Endonucleolytic cleavage to 5'-phosphomonoester.. Endonuclease that specifically degrades the RNA of RNA-DNA hybrids. The sequence is that of Ribonuclease HII from Listeria innocua serovar 6a (strain ATCC BAA-680 / CLIP 11262).